The sequence spans 132 residues: Small ribosomal subunit protein uS8 (132 aa).

It belongs to the universal ribosomal protein uS8 family. As to quaternary structure, part of the 30S ribosomal subunit. Contacts proteins S5 and S12.

In terms of biological role, one of the primary rRNA binding proteins, it binds directly to 16S rRNA central domain where it helps coordinate assembly of the platform of the 30S subunit. This Lactobacillus helveticus (strain DPC 4571) protein is Small ribosomal subunit protein uS8.